We begin with the raw amino-acid sequence, 325 residues long: Isoaspartyl peptidase/L-asparaginase (325 aa).

Thr193 acts as the Nucleophile in catalysis. Substrate-binding positions include 221–224 and 243–246; these read RIGD and TGKG.

It belongs to the Ntn-hydrolase family. As to quaternary structure, heterotetramer of two alpha and two beta chains arranged as a dimer of alpha/beta heterodimers. In terms of processing, cleaved into an alpha and beta chain by autocatalysis; this activates the enzyme. The N-terminal residue of the beta subunit is responsible for the nucleophile hydrolase activity. Developing seeds.

It carries out the reaction Cleavage of a beta-linked Asp residue from the N-terminus of a polypeptide.. In terms of biological role, acts in asparagine catabolism but also in the final steps of protein degradation via hydrolysis of a range of isoaspartyl dipeptides. In Lupinus angustifolius (Narrow-leaved blue lupine), this protein is Isoaspartyl peptidase/L-asparaginase.